The following is a 476-amino-acid chain: GTPase Der (476 aa).

2 EngA-type G domains span residues 3–167 and 205–380; these read FTVA…GEDM and LRVA…KTWN. GTP is bound by residues 9 to 16, 56 to 60, 119 to 122, 211 to 218, 258 to 262, and 323 to 326; these read GRPNVGKS, DTAGL, NKSE, GRPNAGKS, DTAGM, and NKWD. The region spanning 381–465 is the KH-like domain; the sequence is RRISTAKLNR…PIRVHYRGSD (85 aa).

The protein belongs to the TRAFAC class TrmE-Era-EngA-EngB-Septin-like GTPase superfamily. EngA (Der) GTPase family. In terms of assembly, associates with the 50S ribosomal subunit.

Functionally, GTPase that plays an essential role in the late steps of ribosome biogenesis. The chain is GTPase Der from Agrobacterium fabrum (strain C58 / ATCC 33970) (Agrobacterium tumefaciens (strain C58)).